The sequence spans 255 residues: Flap endonuclease Xni (255 aa).

D105 provides a ligand contact to Mg(2+). The 93-residue stretch at 162–254 (EHKQFIDYLA…LKQFRLPKAN (93 aa)) folds into the 5'-3' exonuclease domain. Positions 172, 173, 181, 183, and 186 each coordinate K(+). The segment at 185–190 (GIGPKS) is interaction with DNA.

Belongs to the Xni family. Mg(2+) is required as a cofactor. It depends on K(+) as a cofactor.

Functionally, has flap endonuclease activity. During DNA replication, flap endonucleases cleave the 5'-overhanging flap structure that is generated by displacement synthesis when DNA polymerase encounters the 5'-end of a downstream Okazaki fragment. This chain is Flap endonuclease Xni, found in Shewanella piezotolerans (strain WP3 / JCM 13877).